Consider the following 89-residue polypeptide: Arminin 375 (89 aa).

An N-terminal signal peptide occupies residues 1–18; that stretch reads MKAVFAILFLAFIALTYA. Residues 19 to 57 constitute a propeptide that is removed on maturation; sequence KSYDEVKEEIKNEVEREIFEDLEEESDELDNYVEESNDA. Alanine 86 carries the alanine amide modification.

Belongs to the arminin family. Expressed in entodermal epithelium along the body column.

The protein localises to the secreted. It is found in the target cell membrane. In terms of biological role, antimicrobial peptide with a broad-spectrum antimicrobial activity. Keeps its antibacterial activity under a wide range of salt concentrations that mimic physiological conditions of human blood, which is surprising, since Hydra is an obligate freshwater animal with nearly no salt tolerance. Does not affect red blood cells. The sequence is that of Arminin 375 from Hydra oligactis (Brown hydra).